The primary structure comprises 852 residues: Lon protease homolog 2, peroxisomal (852 aa).

Residue Ser-2 is modified to N-acetylserine. The region spanning 13–222 is the Lon N-terminal domain; sequence LPLLLTHESV…MTIPLLVRQI (210 aa). Position 375-382 (375-382) interacts with ATP; it reads GPPGVGKT. Residues 651–837 form the Lon proteolytic domain; it reads LSQPGVAIGL…DEVLNAAFDG (187 aa). Active-site residues include Ser-743 and Lys-786. The Microbody targeting signal signature appears at 850 to 852; the sequence is SKL.

Belongs to the peptidase S16 family. In terms of assembly, interacts with PEX5. Interacts with TYSND1. May interact with enzymes involved in beta-oxidation of fatty acids, including ACOX1/AOX.

It is found in the peroxisome matrix. The enzyme catalyses Hydrolysis of proteins in presence of ATP.. Functionally, ATP-dependent serine protease that mediates the selective degradation of misfolded and unassembled polypeptides in the peroxisomal matrix. Necessary for type 2 peroxisome targeting signal (PTS2)-containing protein processing and facilitates peroxisome matrix protein import. May indirectly regulate peroxisomal fatty acid beta-oxidation through degradation of the self-processed forms of TYSND1. The polypeptide is Lon protease homolog 2, peroxisomal (Lonp2) (Rattus norvegicus (Rat)).